The primary structure comprises 1698 residues: Protein DOP1 (1698 aa).

Ser244 is modified (phosphoserine).

This sequence belongs to the DOP1 family. Interacts with MON2.

The protein localises to the golgi apparatus membrane. Functionally, required for traffic between late Golgi and early endosomes, and for the normal structure and organization of the endoplasmic reticulum. Required for normal cellular morphogenesis. This Saccharomyces cerevisiae (strain ATCC 204508 / S288c) (Baker's yeast) protein is Protein DOP1 (DOP1).